Consider the following 532-residue polypeptide: Flavin-containing monooxygenase 3 (532 aa).

FAD contacts are provided by residues Gly-9–Ser-13, Glu-32, Leu-40–Trp-41, and Asn-61–Ser-62. Residues Thr-60–Asn-61 and Ser-195–Asp-198 contribute to the NADP(+) site. At Ser-401 the chain carries Phosphoserine. The chain crosses the membrane as a helical span at residues Cys-512–Ile-532.

It belongs to the FMO family. It depends on FAD as a cofactor.

The protein resides in the microsome membrane. Its subcellular location is the endoplasmic reticulum membrane. The catalysed reaction is trimethylamine + NADPH + O2 = trimethylamine N-oxide + NADP(+) + H2O. It carries out the reaction N,N-dimethylaniline + NADPH + O2 + H(+) = N,N-dimethylaniline N-oxide + NADP(+) + H2O. The enzyme catalyses hypotaurine + NADPH + O2 + H(+) = taurine + NADP(+) + H2O. It catalyses the reaction (S)-nicotine + NADPH + O2 = trans-(S)-nicotine N(1')-oxide + NADP(+) + H2O. The catalysed reaction is albendazole + NADPH + O2 + H(+) = albendazole S-oxide + NADP(+) + H2O. Functionally, essential hepatic enzyme that catalyzes the oxygenation of a wide variety of nitrogen- and sulfur-containing compounds including drugs as well as dietary compounds. Plays an important role in the metabolism of trimethylamine (TMA), via the production of trimethylamine N-oxide (TMAO) metabolite. TMA is generated by the action of gut microbiota using dietary precursors such as choline, choline containing compounds, betaine or L-carnitine. By regulating TMAO concentration, FMO3 directly impacts both platelet responsiveness and rate of thrombus formation. The chain is Flavin-containing monooxygenase 3 (FMO3) from Canis lupus familiaris (Dog).